Reading from the N-terminus, the 152-residue chain is uncharacterized protein (152 aa).

5 helical membrane-spanning segments follow: residues 2-22, 33-53, 58-78, 97-117, and 122-142; these read GVVF…LKLM, LKMI…WLIM, FLIE…LIYL, FMGN…IEYV, and IASP…FFNC.

The protein resides in the cell membrane. This is an uncharacterized protein from Methanocaldococcus jannaschii (strain ATCC 43067 / DSM 2661 / JAL-1 / JCM 10045 / NBRC 100440) (Methanococcus jannaschii).